Reading from the N-terminus, the 637-residue chain is Chaperone protein DnaK (637 aa).

A Phosphothreonine; by autocatalysis modification is found at T196. Disordered regions lie at residues 503–525 and 598–637; these read AEINKMKDDAKQHADEDKKRKEE and SGAGAAQAQPEAPQNSGSSQSSGGDGAVNAEYEVINDDKK. The span at 598–619 shows a compositional bias: low complexity; sequence SGAGAAQAQPEAPQNSGSSQSS.

Belongs to the heat shock protein 70 family.

Functionally, acts as a chaperone. The polypeptide is Chaperone protein DnaK (Chlorobium chlorochromatii (strain CaD3)).